Here is a 528-residue protein sequence, read N- to C-terminus: Folylpolyglutamate synthase (528 aa).

Residue Gly-104 to Gly-107 participates in ATP binding. The Mg(2+) site is built by Ser-134, Glu-208, and His-236. ATP is bound by residues Arg-351 and Asp-365.

The protein belongs to the folylpolyglutamate synthase family. It depends on a monovalent cation as a cofactor.

Its subcellular location is the mitochondrion inner membrane. It is found in the mitochondrion matrix. It localises to the cytoplasm. It carries out the reaction (6S)-5,6,7,8-tetrahydrofolyl-(gamma-L-Glu)(n) + L-glutamate + ATP = (6S)-5,6,7,8-tetrahydrofolyl-(gamma-L-Glu)(n+1) + ADP + phosphate + H(+). Its pathway is cofactor biosynthesis; tetrahydrofolylpolyglutamate biosynthesis. In terms of biological role, catalyzes conversion of folates to polyglutamate derivatives allowing concentration of folate compounds in the cell and the intracellular retention of these cofactors, which are important substrates for most of the folate-dependent enzymes that are involved in one-carbon transfer reactions involved in purine, pyrimidine and amino acid synthesis. In Neurospora crassa (strain ATCC 24698 / 74-OR23-1A / CBS 708.71 / DSM 1257 / FGSC 987), this protein is Folylpolyglutamate synthase (met-6).